Here is a 473-residue protein sequence, read N- to C-terminus: Cysteine--tRNA ligase (473 aa).

Cys28 contributes to the Zn(2+) binding site. A 'HIGH' region motif is present at residues 30-40 (PTVYNMPHIGN). Residues Cys213, His238, and Glu242 each contribute to the Zn(2+) site. The 'KMSKS' region motif lies at 270–274 (KMSKS). Lys273 contributes to the ATP binding site.

This sequence belongs to the class-I aminoacyl-tRNA synthetase family. It depends on Zn(2+) as a cofactor.

The protein localises to the cytoplasm. The enzyme catalyses tRNA(Cys) + L-cysteine + ATP = L-cysteinyl-tRNA(Cys) + AMP + diphosphate. This Methanosarcina mazei (strain ATCC BAA-159 / DSM 3647 / Goe1 / Go1 / JCM 11833 / OCM 88) (Methanosarcina frisia) protein is Cysteine--tRNA ligase.